The primary structure comprises 116 residues: MARIAGVDLPRDKRIVVALTYIYGIGDATAKKICADAGVSEDIRSKDLTPEDQEKLRAEVDKYRVEGDLRREVSMNIKRLVDIGSYRGIRHRRGLPVRGQNTKNNARTRKGTKRNR.

Residues 92-116 form a disordered region; sequence RRGLPVRGQNTKNNARTRKGTKRNR. Basic residues predominate over residues 106–116; sequence ARTRKGTKRNR.

The protein belongs to the universal ribosomal protein uS13 family. As to quaternary structure, part of the 30S ribosomal subunit. Forms a loose heterodimer with protein S19. Forms two bridges to the 50S subunit in the 70S ribosome.

Functionally, located at the top of the head of the 30S subunit, it contacts several helices of the 16S rRNA. In the 70S ribosome it contacts the 23S rRNA (bridge B1a) and protein L5 of the 50S subunit (bridge B1b), connecting the 2 subunits; these bridges are implicated in subunit movement. Contacts the tRNAs in the A and P-sites. The protein is Small ribosomal subunit protein uS13 of Lactobacillus acidophilus (strain ATCC 700396 / NCK56 / N2 / NCFM).